The primary structure comprises 133 residues: Ribonucleases P/MRP protein subunit POP8 (133 aa).

Component of nuclear RNase P and RNase MRP complexes. RNase P consists of an RNA moiety and at least 9 protein subunits including POP1, POP3, POP4, POP5, POP6, POP7, POP8, RPP1 and RPR2. RNase MRP complex consists of an RNA moiety and at least 10 protein subunits including POP1, POP3, POP4, POP5, POP6, POP7, POP8, RMP1, RPP1 and SNM1, many of which are shared with the RNase P complex.

The protein localises to the nucleus. The enzyme catalyses Endonucleolytic cleavage of RNA, removing 5'-extranucleotides from tRNA precursor.. In terms of biological role, component of ribonuclease P, a protein complex that generates mature tRNA molecules by cleaving their 5'-ends. Also a component of RNase MRP, which cleaves pre-rRNA sequences. The polypeptide is Ribonucleases P/MRP protein subunit POP8 (POP8) (Saccharomyces cerevisiae (strain ATCC 204508 / S288c) (Baker's yeast)).